A 327-amino-acid polypeptide reads, in one-letter code: Gibberellin 2-beta-dioxygenase 1 (327 aa).

Positions 171–276 (QSDCLFRVNH…RLSMIYFCGP (106 aa)) constitute a Fe2OG dioxygenase domain. Fe cation is bound by residues H200, D202, and H257. R267 is a catalytic residue.

It belongs to the iron/ascorbate-dependent oxidoreductase family. GA2OX subfamily. Requires Fe cation as cofactor. In terms of tissue distribution, predominantly expressed in roots, flowers, young fruits and seeds.

It carries out the reaction gibberellin A1 + 2-oxoglutarate + O2 = gibberellin A8 + succinate + CO2. It functions in the pathway plant hormone biosynthesis; gibberellin biosynthesis. Functionally, catalyzes the 2-beta-hydroxylation of several biologically active gibberellins, leading to the homeostatic regulation of their endogenous level. Catabolism of gibberellins (GAs) plays a central role in plant development. Converts GA9/GA20 to GA51/GA29 and GA4/GA1 to GA34/GA8. This Pisum sativum (Garden pea) protein is Gibberellin 2-beta-dioxygenase 1 (GA2OX1).